We begin with the raw amino-acid sequence, 449 residues long: MAGRSWLIDSNRIATKIMSASASSDPRQVVWKSNPSRHCPKCQHVIDNSDVVDDWPGLPRGVKFDPSDPEIIWHLLAKSGLSGLSSHPFIDEFIPTVNQDDGICYTHPKNLPGVKSDGTVSHFFHKAIKAYSTGTRKRRKIHDDDFGDVRWHKTGRTKPVVLDGVQRGCKKIMVLYGGKAVKTNWVMHQYHLGIEEDEKEGDYVVSKIFYQQPQQLVVKRGDKAEQEVSEDIFAAVTPTADPVTPKLATPEPRNAVRICSDSHIASDYVTPSDYVSAHEVSLAETSEVMCMEDEVQSIQPNHERPSSGPELEHGLENGAKEMLDDKEEQEKDRDNENQGEEDPTWFDSGSQFILNSQQLVEALSLCDDLLGSQDREENTNSGSLKDKQPCIADYAHLGPEDFKRDLEECQKIVLDPSNIELDTPPEFRLSQLEFGSQDSFLAWGTGKTD.

The NAC domain occupies 58–211; sequence LPRGVKFDPS…DYVVSKIFYQ (154 aa). A DNA-binding region spans residues 167-217; sequence RGCKKIMVLYGGKAVKTNWVMHQYHLGIEEDEKEGDYVVSKIFYQQPQQLV. The span at 324–336 shows a compositional bias: basic and acidic residues; it reads DDKEEQEKDRDNE. Residues 324 to 348 form a disordered region; sequence DDKEEQEKDRDNENQGEEDPTWFDS.

Phosphorylated in a DNA stress-independent manner. Hyperphosphorylated on SQ motifs upon double-strand breaks, H(2)O(2) or zeocin treatments. Hyperphosphorylation is required for SOG1 function, and unlike constitutive phosphorylation, is ATM dependent. In terms of tissue distribution, expressed in shoot and root apical meristems, in lateral root primordia, in the vasculature of young leaves and in the root stele.

The protein localises to the nucleus. Transcription factor regulating the transcriptional activation response to gamma irradiation. Required for stem-cell death induced by UVB or by gamma irradiation. Not required for ATM activation, but participates in pathways governed by both ATM and ATR sensor kinases. Involved in DNA damage response (DDR) system that regulates cell cycle arrest. Functional homolog of animal p53. Regulates SMR5 and SMR7 transcription. Regulates DNA repair and cytokinin signaling separately and plays a key role in controlling lateral root formation under genotoxic stress. This is SUPPRESSOR OF GAMMA RESPONSE 1 from Arabidopsis thaliana (Mouse-ear cress).